The sequence spans 365 residues: tRNA/tmRNA (uracil-C(5))-methyltransferase (365 aa).

S-adenosyl-L-methionine contacts are provided by Q189, Y217, N222, E238, and D298. The Nucleophile role is filled by C323. Residue E357 is the Proton acceptor of the active site.

It belongs to the class I-like SAM-binding methyltransferase superfamily. RNA M5U methyltransferase family. TrmA subfamily.

The catalysed reaction is uridine(54) in tRNA + S-adenosyl-L-methionine = 5-methyluridine(54) in tRNA + S-adenosyl-L-homocysteine + H(+). It catalyses the reaction uridine(341) in tmRNA + S-adenosyl-L-methionine = 5-methyluridine(341) in tmRNA + S-adenosyl-L-homocysteine + H(+). Functionally, dual-specificity methyltransferase that catalyzes the formation of 5-methyluridine at position 54 (m5U54) in all tRNAs, and that of position 341 (m5U341) in tmRNA (transfer-mRNA). This is tRNA/tmRNA (uracil-C(5))-methyltransferase from Shewanella halifaxensis (strain HAW-EB4).